We begin with the raw amino-acid sequence, 224 residues long: Casparian strip membrane protein 1 (224 aa).

The disordered stretch occupies residues 1 to 22 (MSSGEPAAVSIPIHDHHGKAPA). Topologically, residues 1 to 62 (MSSGEPAAVS…RGDHHRGSRC (62 aa)) are cytoplasmic. A helical membrane pass occupies residues 63 to 83 (LAFLDFILRIAAFGPALAAAI). At 84 to 110 (STGTSDETLSVFTEFYQFRARFDDFPA) the chain is on the extracellular side. Residues 111–131 (FLFFLVANAIVAGYLVLSLPF) form a helical membrane-spanning segment. Residues 132-145 (SAVLVIRPQTIGLR) lie on the Cytoplasmic side of the membrane. A helical membrane pass occupies residues 146–166 (LLLLVCDMIMAAMLTAAASAA). The Extracellular segment spans residues 167 to 200 (AAIVDLAHNGNLRANWVAICMQFHGFCQRTSGSV). Residues 201–221 (VASFLTVVILMFLVILAACSI) form a helical membrane-spanning segment. The Cytoplasmic segment spans residues 222–224 (RKR).

Belongs to the Casparian strip membrane proteins (CASP) family. Homodimer and heterodimers.

It localises to the cell membrane. Its function is as follows. Regulates membrane-cell wall junctions and localized cell wall deposition. Required for establishment of the Casparian strip membrane domain (CSD) and the subsequent formation of Casparian strips, a cell wall modification of the root endodermis that determines an apoplastic barrier between the intraorganismal apoplasm and the extraorganismal apoplasm and prevents lateral diffusion. This is Casparian strip membrane protein 1 from Oryza sativa subsp. indica (Rice).